We begin with the raw amino-acid sequence, 201 residues long: Small ribosomal subunit protein uS4c (201 aa).

The interval 17 to 44 is disordered; that stretch reads ALPGLTNKKPRNGSDLRNQSRSGKKSQY. One can recognise an S4 RNA-binding domain in the interval 89–149; that stretch reads MRLDNILFRL…DEQKSRALIQ (61 aa).

Belongs to the universal ribosomal protein uS4 family. In terms of assembly, part of the 30S ribosomal subunit. Contacts protein S5. The interaction surface between S4 and S5 is involved in control of translational fidelity.

It is found in the plastid. The protein resides in the chloroplast. Its function is as follows. One of the primary rRNA binding proteins, it binds directly to 16S rRNA where it nucleates assembly of the body of the 30S subunit. In terms of biological role, with S5 and S12 plays an important role in translational accuracy. This Nicotiana sylvestris (Wood tobacco) protein is Small ribosomal subunit protein uS4c (rps4).